Reading from the N-terminus, the 473-residue chain is Cholesterol 22-monohydroxylase CYP90B52 (473 aa).

A helical membrane pass occupies residues 2 to 22; the sequence is EGLLLLLPTAIIALYLYISLI. Heme is bound at residue cysteine 422.

Belongs to the cytochrome P450 family. Mainly expressed in leaves and roots and, at low levels, in fruits and stems.

Its subcellular location is the membrane. The catalysed reaction is cholesterol + reduced [NADPH--hemoprotein reductase] + O2 = (22S)-22-hydroxycholesterol + oxidized [NADPH--hemoprotein reductase] + H2O + H(+). It participates in steroid metabolism; cholesterol metabolism. Its function is as follows. Canonical brassinosteroid (BR)-biosynthetic enzyme capable of converting cholesterol to 22S-hydroxycholesterol via sterol-C22 hydroxylation. The sequence is that of Cholesterol 22-monohydroxylase CYP90B52 from Paris polyphylla (Daiswa polyphylla).